A 573-amino-acid polypeptide reads, in one-letter code: Probable D-xylulose kinase A (573 aa).

4 residues coordinate substrate: His-97, Arg-168, Asp-284, and Asn-285. Residues Trp-366, 471-472 (GG), and Asn-475 contribute to the ATP site.

This sequence belongs to the FGGY kinase family.

The protein resides in the cytoplasm. It carries out the reaction D-xylulose + ATP = D-xylulose 5-phosphate + ADP + H(+). Functionally, highly specific D-xylulose kinase which participates in the catabolism of xylose. Xylose is a major component of hemicelluloses such as xylan. Most fungi utilize D-xylose via three enzymatic reactions, xylose reductase (XR), xylitol dehydrogenase (XDH), and xylulokinase, to form xylulose 5-phosphate, which enters pentose phosphate pathway. The sequence is that of Probable D-xylulose kinase A (xkiA) from Aspergillus clavatus (strain ATCC 1007 / CBS 513.65 / DSM 816 / NCTC 3887 / NRRL 1 / QM 1276 / 107).